A 252-amino-acid chain; its full sequence is Iron-sulfur cluster co-chaperone protein HscB homolog (252 aa).

The N-terminal 59 residues, 1–59 (MKKTKTMVASISTLIRRTYPSTNQCNSLATIQSQTQLPRESLQHHSSAEGRLRFSGRVF), are a transit peptide targeting the mitochondrion. One can recognise a J domain in the interval 93–165 (DYFQIFGLEK…LSRAMYIMKL (73 aa)).

This sequence belongs to the HscB family. As to quaternary structure, interacts with ISU1 and HSP70-9/HSCA1.

It localises to the mitochondrion. It is found in the cytoplasm. The protein localises to the cytosol. Co-chaperone required for the assembly of iron-sulfur [Fe-S] clusters in both mitochondria and cytosol. Required for the activity of iron-sulfur proteins such as aconitase and succinate dehydrogenase. Involved in iron homeostasis and may take part in the control of iron translocation from roots to shoots. In Arabidopsis thaliana (Mouse-ear cress), this protein is Iron-sulfur cluster co-chaperone protein HscB homolog.